A 266-amino-acid chain; its full sequence is tRNA pseudouridine synthase A (266 aa).

The active-site Nucleophile is the Asp-51. Tyr-106 serves as a coordination point for substrate.

The protein belongs to the tRNA pseudouridine synthase TruA family.

The enzyme catalyses uridine(38/39/40) in tRNA = pseudouridine(38/39/40) in tRNA. Functionally, formation of pseudouridine at positions 38, 39 and 40 in the anticodon stem and loop of transfer RNAs. The polypeptide is tRNA pseudouridine synthase A (Pyrococcus furiosus (strain ATCC 43587 / DSM 3638 / JCM 8422 / Vc1)).